The chain runs to 466 residues: RUS family member 1 (466 aa).

Alanine 2 is modified (N-acetylalanine). A helical membrane pass occupies residues 245–265 (LLMLPLVSDCPSLSLGCFVLL).

This sequence belongs to the RUS1 family.

It is found in the membrane. This is RUS family member 1 from Mus musculus (Mouse).